A 462-amino-acid polypeptide reads, in one-letter code: Histidine--tRNA ligase (462 aa).

This sequence belongs to the class-II aminoacyl-tRNA synthetase family. In terms of assembly, homodimer.

Its subcellular location is the cytoplasm. It catalyses the reaction tRNA(His) + L-histidine + ATP = L-histidyl-tRNA(His) + AMP + diphosphate + H(+). The protein is Histidine--tRNA ligase (hisS) of Nostoc sp. (strain PCC 7120 / SAG 25.82 / UTEX 2576).